We begin with the raw amino-acid sequence, 128 residues long: Large-conductance mechanosensitive channel (128 aa).

2 helical membrane-spanning segments follow: residues 10–30 (FAMR…SAFG) and 76–96 (GLFI…FMMI).

It belongs to the MscL family. As to quaternary structure, homopentamer.

Its subcellular location is the cell inner membrane. In terms of biological role, channel that opens in response to stretch forces in the membrane lipid bilayer. May participate in the regulation of osmotic pressure changes within the cell. The polypeptide is Large-conductance mechanosensitive channel (Haemophilus influenzae (strain 86-028NP)).